A 1334-amino-acid polypeptide reads, in one-letter code: Aldehyde oxidase 3 (1334 aa).

Positions 8–95 (DELIFFVNGK…GAAVTTVEGI (88 aa)) constitute a 2Fe-2S ferredoxin-type domain. Residues cysteine 47, cysteine 52, cysteine 55, and cysteine 77 each coordinate [2Fe-2S] cluster. Glutamine 116 contacts Mo-molybdopterin. Residues cysteine 117, cysteine 120, cysteine 152, and cysteine 154 each coordinate [2Fe-2S] cluster. Positions 236 to 421 (FRGERTTWIA…ISVFVPLSRK (186 aa)) constitute an FAD-binding PCMH-type domain. Position 264-271 (264-271 (LVIGNTCL)) interacts with FAD. Serine 320 carries the phosphoserine modification. Residues serine 354, histidine 358, aspartate 367, and leucine 411 each contribute to the FAD site. Residues glycine 801, leucine 1042, and glutamine 1198 each coordinate Mo-molybdopterin. Glutamate 1265 serves as the catalytic Proton acceptor; for azaheterocycle hydroxylase activity.

It belongs to the xanthine dehydrogenase family. Homodimer. [2Fe-2S] cluster serves as cofactor. It depends on FAD as a cofactor. Mo-molybdopterin is required as a cofactor.

The protein localises to the cytoplasm. It carries out the reaction an aldehyde + O2 + H2O = a carboxylate + H2O2 + H(+). Functionally, oxidase with broad substrate specificity, oxidizing aromatic azaheterocycles, such as N1-methylnicotinamide and phthalazine, as well as aldehydes, such as benzaldehyde, retinal and pyridoxal. Plays a key role in the metabolism of xenobiotics and drugs containing aromatic azaheterocyclic substituents. Is probably involved in the regulation of reactive oxygen species homeostasis. Is a prominent source of superoxide generation via the one-electron reduction of molecular oxygen. Also catalyzes nitric oxide (NO) production; under anaerobic conditions, reduces nitrite to NO with NADH or aldehyde as electron donor, but under aerobic conditions, NADH is the preferred substrate. These reactions may be catalyzed by several isozymes. The sequence is that of Aldehyde oxidase 3 (Aox3) from Rattus norvegicus (Rat).